Reading from the N-terminus, the 622-residue chain is Phosphomethylpyrimidine synthase (622 aa).

Substrate contacts are provided by residues asparagine 226, methionine 255, tyrosine 284, histidine 320, 340–342 (SRG), 381–384 (DGLR), and glutamate 420. Residue histidine 424 coordinates Zn(2+). Residue tyrosine 447 coordinates substrate. Residue histidine 488 coordinates Zn(2+). Residues cysteine 568, cysteine 571, and cysteine 576 each contribute to the [4Fe-4S] cluster site.

The protein belongs to the ThiC family. Homodimer. [4Fe-4S] cluster is required as a cofactor.

It catalyses the reaction 5-amino-1-(5-phospho-beta-D-ribosyl)imidazole + S-adenosyl-L-methionine = 4-amino-2-methyl-5-(phosphooxymethyl)pyrimidine + CO + 5'-deoxyadenosine + formate + L-methionine + 3 H(+). Its pathway is cofactor biosynthesis; thiamine diphosphate biosynthesis. In terms of biological role, catalyzes the synthesis of the hydroxymethylpyrimidine phosphate (HMP-P) moiety of thiamine from aminoimidazole ribotide (AIR) in a radical S-adenosyl-L-methionine (SAM)-dependent reaction. The polypeptide is Phosphomethylpyrimidine synthase (Ruthia magnifica subsp. Calyptogena magnifica).